We begin with the raw amino-acid sequence, 224 residues long: Glutamate/aspartate import permease protein GltK (224 aa).

The Periplasmic portion of the chain corresponds to 1–19 (MYEFDWSSIVPSLPYLLDG). The helical transmembrane segment at 20–40 (LVITLKITVTAVVIGILWGTM) threads the bilayer. The ABC transmembrane type-1 domain occupies 20–216 (LVITLKITVT…VISLSASLLV (197 aa)). The Cytoplasmic segment spans residues 41–67 (LAVMRLSSFAPVAWFAKAYVNVFRSIP). The chain crosses the membrane as a helical span at residues 68–88 (LVMVLLWFYLIVPGFLQNVLG). Topologically, residues 89–94 (LSPKND) are periplasmic. A helical transmembrane segment spans residues 95 to 112 (IRLISAMVAFSMFEAAYY). Over 113–154 (SEIIRAGIQSISRGQSSAALALGMTHWQSMKLIILPQAFRAM) the chain is Cytoplasmic. The helical transmembrane segment at 155–175 (VPLLLTQGIVLFQDTSLVYVL) threads the bilayer. Residues 176 to 196 (SLADFFRTASTIGERDGTQVE) lie on the Periplasmic side of the membrane. A helical transmembrane segment spans residues 197 to 217 (MILFAGFVYFVISLSASLLVS). Over 218-224 (YLKRRTA) the chain is Cytoplasmic.

It belongs to the binding-protein-dependent transport system permease family. HisMQ subfamily. In terms of assembly, the complex is composed of two ATP-binding proteins (GltL), two transmembrane proteins (GltJ and GltK) and a solute-binding protein (GltI).

The protein localises to the cell inner membrane. Its function is as follows. Part of the ABC transporter complex GltIJKL involved in glutamate and aspartate uptake. Probably responsible for the translocation of the substrate across the membrane. The protein is Glutamate/aspartate import permease protein GltK (gltK) of Escherichia coli O157:H7.